Reading from the N-terminus, the 1084-residue chain is MSDSEDSDFSDNQSERSSEAEEVEENEEEEEQGSVAGSDKAEEEGEDLEDEEEYDEEEEEDDDRPRKKARHGGFILDEADVDDEYEDEDPWEDGAEDILEKEEAEVSNLDHVVLDEDHSGSRRLQNLWRDSREEALGEYYMRKYAKSSGGEHFYGGSEDLSDDITQQQLLPGVKDPNLWTVKCKIGEERATAISLMRKFVAYQCTDTPLQIKSVVAPEHVKGYIYVEAYKQTHVKAAIEGVGNLRMGFWNQQMVPIKEMTDVLKVVKEVTNLKPKSWVRLKRGLYKDDIAQVDYVEPSQNTISLKMIPRIDLDRIKARMSMKDWFAKRKKFKRPPQRLFDAEKIRSLGGEVSHDGDFMIFEANRYSRKGFLFKSFAMSAVITEGVKPTLSELEKFEDQPEGIDLEVVTETTGKEREHNLQAGDNVEVCEGELINLQGKILSVDGNKITIMPKHEDLKDPLEFPAHELRKYFRMGDHVKVIAGRYEGDTGLIVRVEENFVILFSDLTMHELKVLPRDLQLCSETASGVDAGGQHEWGELVQLDPQTVGVIVRLERETFQVLNMHGKVLTVRHQAVNRRKDNRFAVALDSEQNNIHVKDIVKVIDGPHSGREGEIRHIFRGFAFLHCKKLVENGGMFVCKARHLVLAGGSKPRDVTNFTVGGFAPMSPRISSPMHPGGGGQPQRGGGGGGGGGMGRGRGRRDNDLIGQTVRISQGPYKGYIGVVKDATESTARVELHSTCQTISVDRQRLTTVGGKERQGRSSTHLRTPMYGSQTPIYGTGSRTPMYGSQTPLHDGSRTPHYGSQTPLHDGSRTPGQSGAWDPNNPNTPSRPDDEYEFAYDDEPSPSPQGYGGTPNPQTPGYPEVPSPQVNPQYNPQTPGTPAMYNTDQYSPYAAPSPQGSYQPSPSPQSYHQVAPSPVGYQNTHSPASYHPTPSPMAYQASPSPSPVGYSPMTPGAPSPGGYNPHTPGSNIDQASNDWVTTDIMVRVKDTFLDGGVINQTGIIRSVTGGMCSVFLQDTEKVVSISSEHLEPVTPTKNNKVKVILGEDREATGVLLSIDGEDGIVRMELDEQLKILNLRFLGKLEV.

Residues 1-91 form a disordered region; the sequence is MSDSEDSDFS…DDEYEDEDPW (91 aa). Acidic residues-rich tracts occupy residues 20-32, 41-62, and 77-91; these read AEEV…EEEQ, AEEE…EEDD, and DEAD…EDPW. The segment at 175–269 is interaction with SUPT4H1; it reads DPNLWTVKCK…TDVLKVVKEV (95 aa). 4 KOW domains span residues 272-305, 419-450, 471-502, and 593-626; these read LKPK…ISLK, LQAG…ITIM, FRMG…VILF, and IHVK…LHCK. Residues 312–419 are interaction with RNA polymerase II; it reads LDRIKARMSM…TTGKEREHNL (108 aa). Serine 665 carries the post-translational modification Phosphoserine. Positions 667–700 are disordered; that stretch reads RISSPMHPGGGGQPQRGGGGGGGGGMGRGRGRRD. Residues 674–694 are compositionally biased toward gly residues; it reads PGGGGQPQRGGGGGGGGGMGR. Residues 702 to 735 form the KOW 5 domain; the sequence is DLIGQTVRISQGPYKGYIGVVKDATESTARVELH. Positions 748-973 are disordered; it reads LTTVGGKERQ…HTPGSNIDQA (226 aa). Residues 758-763 form a CTR1-1; approximate repeat; the sequence is GRSSTH. Positions 758–815 are 8 X 7 AA approximate tandem repeats of G-S-[QR]-T-P-X-[YQ], motif CTR1; sequence GRSSTHLRTPMYGSQTPIYGTGSRTPMYGSQTPLHDGSRTPHYGSQTPLHDGSRTPGQ. Residues 759 to 790 show a composition bias toward polar residues; that stretch reads RSSTHLRTPMYGSQTPIYGTGSRTPMYGSQTP. A CTR1-2; approximate repeat occupies 764–769; the sequence is LRTPMY. The stretch at 770-776 is one CTR1-3 repeat; that stretch reads GSQTPIY. Phosphothreonine; by CDK9 occurs at positions 773 and 782. One copy of the CTR1-4 repeat lies at 779-785; the sequence is GSRTPMY. Residues 786–792 form a CTR1-5 repeat; it reads GSQTPLH. Residues 794 to 800 form a CTR1-6 repeat; it reads GSRTPHY. Residues 801 to 807 form a CTR1-7 repeat; that stretch reads GSQTPLH. One copy of the CTR1-8 repeat lies at 809–815; sequence GSRTPGQ. Over residues 832–842 the composition is skewed to acidic residues; that stretch reads DEYEFAYDDEP. One copy of the CTR2-1 repeat lies at 842–849; it reads PSPSPQGY. The interval 842 to 948 is 10 X 8 AA approximate tandem repeats of P-[TS]-P-S-P-[QA]-[SG]-Y, motif CTR2; it reads PSPSPQGYGG…ASPSPSPVGY (107 aa). The stretch at 852–860 is one CTR2-2; approximate repeat; it reads TPNPQTPGY. Positions 855–864 are enriched in pro residues; it reads PQTPGYPEVP. The CTR2-3; approximate repeat unit spans residues 861–867; the sequence is PEVPSPQ. Over residues 866 to 888 the composition is skewed to polar residues; sequence PQVNPQYNPQTPGTPAMYNTDQY. Residues 879-883 form a CTR2-4; half-length repeat; the sequence is TPAMY. The stretch at 894-900 is one CTR2-5; approximate repeat; that stretch reads PSPQGSY. The segment covering 894–909 has biased composition (low complexity); it reads PSPQGSYQPSPSPQSY. The stretch at 902–909 is one CTR2-6 repeat; the sequence is PSPSPQSY. The stretch at 914–919 is one CTR2-7; approximate repeat; sequence PSPVGY. A CTR2-8 repeat occupies 922 to 928; it reads THSPASY. Residues 930-937 form a CTR2-9 repeat; sequence PTPSPMAY. Residues 941–948 form a CTR2-10 repeat; the sequence is PSPSPVGY.

The protein belongs to the SPT5 family. As to quaternary structure, interacts with SUPT4H1 to form the DSIF complex. DSIF interacts with RNA polymerase II and with the positive transcription elongation factor b complex (P-TEFb complex), which is composed of CDK9 and cyclin-T. Phosphorylated. Phosphorylation by P-TEFb (CDK9) at Thr residues of the C-terminal repeats alleviates transcriptional pausing and promotes transcription elongation.

It localises to the nucleus. Its function is as follows. Component of the DRB sensitivity-inducing factor complex (DSIF complex), which regulates mRNA processing and transcription elongation by RNA polymerase II. DSIF positively regulates mRNA capping by stimulating the mRNA guanylyltransferase activity of RNGTT/CAP1A. DSIF also acts cooperatively with the negative elongation factor complex (NELF complex) to enhance transcriptional pausing at sites proximal to the promoter. Transcriptional pausing may facilitate the assembly of an elongation competent RNA polymerase II complex. DSIF and NELF promote pausing by inhibition of the transcription elongation factor TFIIS/S-II. TFIIS/S-II binds to RNA polymerase II at transcription pause sites and stimulates the weak intrinsic nuclease activity of the enzyme. Cleavage of blocked transcripts by RNA polymerase II promotes the resumption of transcription from the new 3' terminus and may allow repeated attempts at transcription through natural pause sites. Following phosphorylation by CDK9, DSIF can also positively regulate transcriptional elongation. Regulation of transcriptional elongation by this protein is required for the expression of genes which control neuronal development. The sequence is that of Transcription elongation factor SPT5 (supt5h) from Danio rerio (Zebrafish).